We begin with the raw amino-acid sequence, 647 residues long: Exoribonuclease 2 (647 aa).

The 327-residue stretch at Arg191 to Ile517 folds into the RNB domain. Residues Pro563–Phe645 enclose the S1 motif domain.

The protein belongs to the RNR ribonuclease family. RNase II subfamily.

The protein resides in the cytoplasm. The enzyme catalyses Exonucleolytic cleavage in the 3'- to 5'-direction to yield nucleoside 5'-phosphates.. Involved in mRNA degradation. Hydrolyzes single-stranded polyribonucleotides processively in the 3' to 5' direction. The polypeptide is Exoribonuclease 2 (Edwardsiella piscicida).